A 2642-amino-acid chain; its full sequence is Fusarielin synthase FSL1 (2642 aa).

The 445-residue stretch at 6–450 folds into the Ketosynthase family 3 (KS3) domain; it reads NEPIAIIGTG…GTNAHAILEA (445 aa). Catalysis depends on for beta-ketoacyl synthase activity residues Cys-179, His-318, and His-370. Residues 566-890 are malonyl-CoA:ACP transacylase (MAT) domain; the sequence is VFTGQGAQWA…PYTSALVRGK (325 aa). Ser-659 acts as the For malonyltransferase activity in catalysis. Residues 965 to 1101 form an N-terminal hotdog fold region; sequence HDLLGIQTAD…GKVCIFLQTE (137 aa). A dehydratase (DH) domain region spans residues 965–1279; the sequence is HDLLGIQTAD…SFSPFAAATD (315 aa). One can recognise a PKS/mFAS DH domain in the interval 965-1280; that stretch reads HDLLGIQTAD…FSPFAAATDR (316 aa). His-997 acts as the Proton acceptor; for dehydratase activity in catalysis. Positions 1126–1280 are C-terminal hotdog fold; the sequence is MAGIDVERFY…FSPFAAATDR (155 aa). Asp-1189 serves as the catalytic Proton donor; for dehydratase activity. The methyltransferase (MET) domain stretch occupies residues 1423 to 1622; the sequence is NYLDRYYTHA…GVDTNTPMPD (200 aa). Residues 2244-2423 are ketoreductase (KR) domain; sequence TYWMLGLTGD…GHNAAVIDIS (180 aa). The region spanning 2556–2635 is the Carrier domain; the sequence is QEVTSVLTSC…DLADYILESL (80 aa). Residue Ser-2595 is modified to O-(pantetheine 4'-phosphoryl)serine.

Requires pantetheine 4'-phosphate as cofactor.

It participates in secondary metabolite biosynthesis. Reducing polyketide synthase; part of the gene cluster that mediates the biosynthesis of fusarielins F, G and H, decaketide compounds with 5 methylations and a decaline core that act as mycoestrogens as they stimulate growth of MCF-7 breast cancer cells. The initial compound in the pathway is produced by the reducing polyketide synthase FSL1. FSL1 lacks an active enoyl reductase (ER) domain and biosynthesis of fusarielins relies on the trans-acting enoyl reductase FSL5, before it is released through hydrolysis catalyzed by the thioesterase FSL2. Fusarielins F, G, and H have a C11=C12 cis double bond and is fully reduced between C10 and C11 and between C12 and C13. FSL3 can be involved in the formation of the C11=C12 cis double bond by moving a hypothetical C10=C11 or C12=C13 trans double bond to form prefusarielin. Prefusarielin is oxygenated at C15 and C16 by the cytochrome P450 monooxygenase FSL4, resulting in fusarielin F, which subsequently is epoxidized into fusarielin G by the same enzyme. The final step in the pathway is a reduction of the carboxylic acid moiety to yield fusarielin H via a still undetermined mechanism. The chain is Fusarielin synthase FSL1 from Gibberella zeae (strain ATCC MYA-4620 / CBS 123657 / FGSC 9075 / NRRL 31084 / PH-1) (Wheat head blight fungus).